Reading from the N-terminus, the 95-residue chain is Aspartyl/glutamyl-tRNA(Asn/Gln) amidotransferase subunit C (95 aa).

This sequence belongs to the GatC family. Heterotrimer of A, B and C subunits.

The enzyme catalyses L-glutamyl-tRNA(Gln) + L-glutamine + ATP + H2O = L-glutaminyl-tRNA(Gln) + L-glutamate + ADP + phosphate + H(+). It catalyses the reaction L-aspartyl-tRNA(Asn) + L-glutamine + ATP + H2O = L-asparaginyl-tRNA(Asn) + L-glutamate + ADP + phosphate + 2 H(+). Functionally, allows the formation of correctly charged Asn-tRNA(Asn) or Gln-tRNA(Gln) through the transamidation of misacylated Asp-tRNA(Asn) or Glu-tRNA(Gln) in organisms which lack either or both of asparaginyl-tRNA or glutaminyl-tRNA synthetases. The reaction takes place in the presence of glutamine and ATP through an activated phospho-Asp-tRNA(Asn) or phospho-Glu-tRNA(Gln). The chain is Aspartyl/glutamyl-tRNA(Asn/Gln) amidotransferase subunit C from Alcanivorax borkumensis (strain ATCC 700651 / DSM 11573 / NCIMB 13689 / SK2).